The primary structure comprises 261 residues: Cytochrome c oxidase subunit 3 (261 aa).

Topologically, residues 1–15 are mitochondrial matrix; the sequence is MTHQTHAYHMVNPSP. A helical membrane pass occupies residues 16–34; the sequence is WPLTGALSALLMTSGLIMW. Over 35-40 the chain is Mitochondrial intermembrane; sequence FHFNSV. The helical transmembrane segment at 41 to 66 threads the bilayer; the sequence is ALLMLGLTTNMLTMYQWWRDVIREST. Residues 67-72 lie on the Mitochondrial matrix side of the membrane; the sequence is FQGHHT. The helical transmembrane segment at 73–105 threads the bilayer; it reads PNVQKGLRYGMILFIISEVLFFTGFFWAFYHSS. The Mitochondrial intermembrane segment spans residues 106–128; the sequence is LAPTPELGGCWPPTGIHPLNPLE. A helical transmembrane segment spans residues 129–152; it reads VPLLNTSVLLASGVSITWAHHSLM. The Mitochondrial matrix segment spans residues 153 to 155; it reads EGN. A helical transmembrane segment spans residues 156 to 183; that stretch reads RNHMLQALFITIALGVYFTLLQASEYYE. Topologically, residues 184–190 are mitochondrial intermembrane; the sequence is APFTISD. Residues 191 to 223 form a helical membrane-spanning segment; the sequence is GVYGSTFFVATGFHGLHVIIGSTFLIVCFFRQL. The Mitochondrial matrix segment spans residues 224 to 232; the sequence is KFHFTSSHH. A helical transmembrane segment spans residues 233–256; sequence FGFEAAAWYWHFVDVVWLFLYVSI. The Mitochondrial intermembrane portion of the chain corresponds to 257 to 261; the sequence is YWWGS.

The protein belongs to the cytochrome c oxidase subunit 3 family. Component of the cytochrome c oxidase (complex IV, CIV), a multisubunit enzyme composed of 14 subunits. The complex is composed of a catalytic core of 3 subunits MT-CO1, MT-CO2 and MT-CO3, encoded in the mitochondrial DNA, and 11 supernumerary subunits COX4I, COX5A, COX5B, COX6A, COX6B, COX6C, COX7A, COX7B, COX7C, COX8 and NDUFA4, which are encoded in the nuclear genome. The complex exists as a monomer or a dimer and forms supercomplexes (SCs) in the inner mitochondrial membrane with NADH-ubiquinone oxidoreductase (complex I, CI) and ubiquinol-cytochrome c oxidoreductase (cytochrome b-c1 complex, complex III, CIII), resulting in different assemblies (supercomplex SCI(1)III(2)IV(1) and megacomplex MCI(2)III(2)IV(2)).

It localises to the mitochondrion inner membrane. The catalysed reaction is 4 Fe(II)-[cytochrome c] + O2 + 8 H(+)(in) = 4 Fe(III)-[cytochrome c] + 2 H2O + 4 H(+)(out). Its function is as follows. Component of the cytochrome c oxidase, the last enzyme in the mitochondrial electron transport chain which drives oxidative phosphorylation. The respiratory chain contains 3 multisubunit complexes succinate dehydrogenase (complex II, CII), ubiquinol-cytochrome c oxidoreductase (cytochrome b-c1 complex, complex III, CIII) and cytochrome c oxidase (complex IV, CIV), that cooperate to transfer electrons derived from NADH and succinate to molecular oxygen, creating an electrochemical gradient over the inner membrane that drives transmembrane transport and the ATP synthase. Cytochrome c oxidase is the component of the respiratory chain that catalyzes the reduction of oxygen to water. Electrons originating from reduced cytochrome c in the intermembrane space (IMS) are transferred via the dinuclear copper A center (CU(A)) of subunit 2 and heme A of subunit 1 to the active site in subunit 1, a binuclear center (BNC) formed by heme A3 and copper B (CU(B)). The BNC reduces molecular oxygen to 2 water molecules using 4 electrons from cytochrome c in the IMS and 4 protons from the mitochondrial matrix. This chain is Cytochrome c oxidase subunit 3 (MT-CO3), found in Nanger granti (Grant's gazelle).